The sequence spans 156 residues: ATP synthase subunit b (156 aa).

Residues 4–26 traverse the membrane as a helical segment; sequence GATFWGPMISFALFVWFTMKYVW.

Belongs to the ATPase B chain family. As to quaternary structure, F-type ATPases have 2 components, F(1) - the catalytic core - and F(0) - the membrane proton channel. F(1) has five subunits: alpha(3), beta(3), gamma(1), delta(1), epsilon(1). F(0) has three main subunits: a(1), b(2) and c(10-14). The alpha and beta chains form an alternating ring which encloses part of the gamma chain. F(1) is attached to F(0) by a central stalk formed by the gamma and epsilon chains, while a peripheral stalk is formed by the delta and b chains.

It localises to the cell inner membrane. Its function is as follows. F(1)F(0) ATP synthase produces ATP from ADP in the presence of a proton or sodium gradient. F-type ATPases consist of two structural domains, F(1) containing the extramembraneous catalytic core and F(0) containing the membrane proton channel, linked together by a central stalk and a peripheral stalk. During catalysis, ATP synthesis in the catalytic domain of F(1) is coupled via a rotary mechanism of the central stalk subunits to proton translocation. Component of the F(0) channel, it forms part of the peripheral stalk, linking F(1) to F(0). The chain is ATP synthase subunit b from Alkalilimnicola ehrlichii (strain ATCC BAA-1101 / DSM 17681 / MLHE-1).